We begin with the raw amino-acid sequence, 468 residues long: ATP synthase subunit beta (468 aa).

ATP is bound at residue 156–163; that stretch reads GGAGVGKT.

Belongs to the ATPase alpha/beta chains family. F-type ATPases have 2 components, CF(1) - the catalytic core - and CF(0) - the membrane proton channel. CF(1) has five subunits: alpha(3), beta(3), gamma(1), delta(1), epsilon(1). CF(0) has three main subunits: a(1), b(2) and c(9-12). The alpha and beta chains form an alternating ring which encloses part of the gamma chain. CF(1) is attached to CF(0) by a central stalk formed by the gamma and epsilon chains, while a peripheral stalk is formed by the delta and b chains.

Its subcellular location is the cell inner membrane. The enzyme catalyses ATP + H2O + 4 H(+)(in) = ADP + phosphate + 5 H(+)(out). Produces ATP from ADP in the presence of a proton gradient across the membrane. The catalytic sites are hosted primarily by the beta subunits. The sequence is that of ATP synthase subunit beta from Sulfurimonas denitrificans (strain ATCC 33889 / DSM 1251) (Thiomicrospira denitrificans (strain ATCC 33889 / DSM 1251)).